The chain runs to 369 residues: Guanine nucleotide-binding protein subunit beta-2 (369 aa).

Residues 1-24 (MSTIAGESSSSSKMPENSQPTTTE) show a composition bias toward polar residues. Positions 1–28 (MSTIAGESSSSSKMPENSQPTTTEKGSE) are disordered. WD repeat units follow at residues 79-109 (GHVG…IVWD), 121-151 (MPTT…SVVP), 167-197 (THTS…AIWD), 209-241 (GHTG…LVWD), 253-283 (GHEA…RLFD), 297-327 (SILF…GVWD), and 339-369 (GHEN…RIWA).

It belongs to the WD repeat G protein beta family. G proteins are composed of 3 units, alpha, beta and gamma. Interacts with G protein gamma subunits gpc-1 and gpc-2 and with egl-10 and eat-16.

In terms of biological role, guanine nucleotide-binding proteins (G proteins) are involved as a modulator or transducer in various transmembrane signaling systems. The beta and gamma chains are required for the GTPase activity, for replacement of GDP by GTP, and for G protein-effector interaction. Plays a role in regulating dopamine-mediated locomotion behavior. The protein is Guanine nucleotide-binding protein subunit beta-2 of Caenorhabditis elegans.